The following is a 2663-amino-acid chain: Ankyrin repeat domain-containing protein 11 (2663 aa).

Disordered stretches follow at residues 1-90 and 128-169; these read MPKG…KEPV and SANS…ERGE. 2 stretches are compositionally biased toward basic and acidic residues: residues 21-54 and 69-90; these read MVEK…VRER and EQKD…KEPV. Residues 128–155 are compositionally biased toward polar residues; it reads SANSPVDTTPKHPSQSTVCQKGTPNSAS. Basic and acidic residues predominate over residues 156-169; that stretch reads KTKDKVNKRNERGE. ANK repeat units lie at residues 167–196, 200–229, 233–262, and 266–292; these read RGET…DVNV, AGWT…EVNT, DDDT…NPQQ, and KGET…YTSS. Position 276 is a phosphoserine (Ser-276). 3 disordered regions span residues 289-380, 398-647, and 723-783; these read YTSS…SNSF, APKK…GQCS, and DTNK…NDLK. Over residues 295–305 the composition is skewed to acidic residues; the sequence is SSTESSEEEDA. Residues 309 to 320 are compositionally biased toward polar residues; that stretch reads APSSSVDGNNTD. The span at 356–376 shows a compositional bias: basic and acidic residues; it reads DRVPPVDDKHLLKKDYRKETK. Residue Ser-408 is modified to Phosphoserine. Thr-410 is modified (phosphothreonine). Ser-411 is subject to Phosphoserine. Residues 438–451 show a composition bias toward basic and acidic residues; that stretch reads KTREPSNAKQQKEK. Residues 452–462 are compositionally biased toward basic residues; that stretch reads NKVKKKRKKET. Positions 463-477 are enriched in basic and acidic residues; that stretch reads KGREVRFGKRSDKFC. The span at 481–493 shows a compositional bias: acidic residues; that stretch reads SESESSESGEDDR. Low complexity predominate over residues 513–531; sequence SLFSSLSASSTSSHGSSAA. Basic and acidic residues predominate over residues 539–550; the sequence is TDQHTKHWRTDN. Residues 551 to 562 are compositionally biased toward polar residues; that stretch reads WKTISSPAWSEV. Residues 576-588 show a composition bias toward low complexity; that stretch reads ESDYSSEGSSVES. 2 stretches are compositionally biased toward basic residues: residues 591–602 and 629–641; these read PVRKRQEHRKRA and VKKH…HKNK. Residue Ser-834 is modified to Phosphoserine. Composition is skewed to basic and acidic residues over residues 881 to 928, 935 to 1043, 1059 to 1090, and 1099 to 1112; these read VKED…EKHK, SEKD…KSIL, KKDT…KEKA, and FSEK…KEKS. Disordered stretches follow at residues 881-1043 and 1059-1393; these read VKED…KSIL and KKDT…GQYE. At Ser-1079 the chain carries Phosphoserine. A Phosphothreonine modification is found at Thr-1120. Ser-1123 is subject to Phosphoserine. Basic and acidic residues-rich tracts occupy residues 1142–1301, 1330–1347, and 1359–1393; these read DLPR…DKIS, GDDK…LKEK, and KSHD…GQYE. Thr-1419 carries the phosphothreonine modification. Composition is skewed to basic and acidic residues over residues 1424–1446, 1466–1545, 1556–1574, 1587–1597, and 1605–1639; these read STEK…KELK, REKW…KGDP, APSK…KLLG, LSQKDLEIEER, and MKQM…DIPA. The interval 1424 to 1710 is disordered; the sequence is STEKKDKNDS…TGVPTPTSVL (287 aa). Ser-1509 bears the Phosphoserine mark. At Ser-1692 the chain carries Phosphoserine. Residues 1698 to 1710 are compositionally biased toward polar residues; it reads SRPTGVPTPTSVL. Position 1792 is a phosphoserine (Ser-1792). Residues 1814–1836 form a disordered region; sequence SVPAASSYDSPMPPSMEDRAPLP. Position 1847 is a phosphoserine (Ser-1847). Tyr-1850 and Tyr-1851 each carry phosphotyrosine. A phosphoserine mark is found at Ser-1852, Ser-1859, and Ser-1990. Disordered stretches follow at residues 1988-2019 and 2131-2406; these read PESP…PAPP and LDLG…STQQ. 2 stretches are compositionally biased toward low complexity: residues 2310–2324 and 2391–2406; these read IQPE…AEAP and RSTQ…STQQ. The segment at 2369–2663 is important for protein degradation; the sequence is AKARGSEDDD…VNDDFVLLPA (295 aa).

In terms of assembly, interacts with the PAS region of the p160 coactivators. Subject to proteasomal degradation which is probably essential to regulate its activity.

The protein localises to the nucleus. Its function is as follows. Chromatin regulator which modulates histone acetylation and gene expression in neural precursor cells. May recruit histone deacetylases (HDACs) to the p160 coactivators/nuclear receptor complex to inhibit ligand-dependent transactivation. Has a role in proliferation and development of cortical neural precursors. May also regulate bone homeostasis. The chain is Ankyrin repeat domain-containing protein 11 (ANKRD11) from Homo sapiens (Human).